A 215-amino-acid polypeptide reads, in one-letter code: Ribose-5-phosphate isomerase A (215 aa).

Substrate contacts are provided by residues 26–29 (TGST), 79–82 (DGAD), and 92–95 (KGGG). The active-site Proton acceptor is Glu101. Lys119 is a binding site for substrate.

Belongs to the ribose 5-phosphate isomerase family. As to quaternary structure, homodimer.

It catalyses the reaction aldehydo-D-ribose 5-phosphate = D-ribulose 5-phosphate. It functions in the pathway carbohydrate degradation; pentose phosphate pathway; D-ribose 5-phosphate from D-ribulose 5-phosphate (non-oxidative stage): step 1/1. Its function is as follows. Catalyzes the reversible conversion of ribose-5-phosphate to ribulose 5-phosphate. This Stenotrophomonas maltophilia (strain R551-3) protein is Ribose-5-phosphate isomerase A.